A 3011-amino-acid polypeptide reads, in one-letter code: Chromodomain-helicase-DNA-binding protein 7 (3011 aa).

5 disordered regions span residues 90–146, 159–189, 202–422, 502–806, and 941–960; these read ISNA…SMWG, PYQQ…QHMQ, MQQH…GSAG, QQLP…VEKI, and PEME…SESS. Positions 159 to 168 are enriched in low complexity; sequence PYQQQQQQPQ. The segment covering 169 to 179 has biased composition (pro residues); sequence PTQPPQAPSGP. Low complexity predominate over residues 203–215; sequence QQHGQPQQQRMNQ. Composition is skewed to polar residues over residues 216–227, 241–258, 291–347, and 374–393; these read FSQGQEGLNQGN, VPQQ…SVQQ, QTLN…NQSV, and GSLN…QGTY. The segment covering 502 to 516 has biased composition (low complexity); sequence QQLPSQQQSFQQQMP. Polar residues-rich tracts occupy residues 576–586 and 630–641; these read TQVSGPNTQLV and DSQNLSRNSVDC. Basic and acidic residues-rich tracts occupy residues 655 to 684 and 718 to 730; these read KKEP…EPKE and KGKE…DLDK. Basic residues predominate over residues 747–759; sequence QKRRSSRQVKRKR. Over residues 760-770 the composition is skewed to basic and acidic residues; that stretch reads YTEDLEFKISD. The span at 783-795 shows a compositional bias: polar residues; it reads SPSNTSQSEQQES. Chromo domains are found at residues 801–868 and 883–948; these read PVVE…GQNK and VEID…RVER. The Helicase ATP-binding domain occupies 981-1155; it reads LFNWYNTRNC…FSLLHFLEPG (175 aa). 994–1001 serves as a coordination point for ATP; it reads DEMGLGKT. The DEAH box signature appears at 1106 to 1109; sequence DEAH. One can recognise a Helicase C-terminal domain in the interval 1295–1465; sequence LIDKLLPKLK…LSKKEIEDLL (171 aa). Disordered stretches follow at residues 1577-1602, 1836-1869, and 2136-2291; these read FSDL…SQGY, GTDM…KDEI, and GTGN…GFYM. A compositionally biased stretch (basic and acidic residues) spans 1585–1597; it reads EEKPSTKPRRPQD. Acidic residues predominate over residues 1845–1856; sequence DGGEFDREDEDP. Positions 1857 to 1867 are enriched in basic and acidic residues; the sequence is EYKPTRTPFKD. Residues 2136-2145 show a composition bias toward polar residues; sequence GTGNANTVSS. Basic and acidic residues-rich tracts occupy residues 2166–2207 and 2218–2238; these read QEEK…KQDC and CELK…SEKG. The segment covering 2239–2253 has biased composition (acidic residues); the sequence is SEEDEEEKLDDDDKS. Residues 2403 to 2433 are a coiled coil; the sequence is RRRRRKIEIEAERAAKRRNLMEMVAQLRESQ. At serine 2561 the chain carries Phosphoserine. Disordered regions lie at residues 2825–2900 and 2946–3011; these read TTGN…LPTN and GSNE…ENDE. Over residues 2841–2851 the composition is skewed to basic and acidic residues; it reads GASKAEEKKNE. Over residues 2864–2877 the composition is skewed to polar residues; the sequence is DTVSATDSANGSVS. The span at 2878-2893 shows a compositional bias: low complexity; sequence AATAATTATATTTTTT. Positions 2948–2964 are enriched in basic and acidic residues; sequence NEEKATDKTEGTAFKDE. Acidic residues-rich tracts occupy residues 2965–2974 and 2984–3011; these read ENLEGSDAEE and ILED…ENDE.

This sequence belongs to the SNF2/RAD54 helicase family. Expressed in the neural epithelium, otic placodes, optic placodes, branchial arches, and the olfactory placodes,.

It localises to the nucleus. The enzyme catalyses ATP + H2O = ADP + phosphate + H(+). In terms of biological role, ATP-dependent chromatin-remodeling factor, slides nucleosomes along DNA; nucleosome sliding requires ATP.Probable transcription regulator. Maybe involved in the in 45S precursor rRNA production. This is Chromodomain-helicase-DNA-binding protein 7 (CHD7) from Gallus gallus (Chicken).